We begin with the raw amino-acid sequence, 448 residues long: Probable glycine dehydrogenase (decarboxylating) subunit 1 (448 aa).

This sequence belongs to the GcvP family. N-terminal subunit subfamily. The glycine cleavage system is composed of four proteins: P, T, L and H. In this organism, the P 'protein' is a heterodimer of two subunits.

It carries out the reaction N(6)-[(R)-lipoyl]-L-lysyl-[glycine-cleavage complex H protein] + glycine + H(+) = N(6)-[(R)-S(8)-aminomethyldihydrolipoyl]-L-lysyl-[glycine-cleavage complex H protein] + CO2. Functionally, the glycine cleavage system catalyzes the degradation of glycine. The P protein binds the alpha-amino group of glycine through its pyridoxal phosphate cofactor; CO(2) is released and the remaining methylamine moiety is then transferred to the lipoamide cofactor of the H protein. The protein is Probable glycine dehydrogenase (decarboxylating) subunit 1 of Geobacillus thermodenitrificans (strain NG80-2).